The chain runs to 45 residues: Photosystem II reaction center protein K (45 aa).

The propeptide occupies 1–8 (MNSALFLA). Residues 23–43 (ILPVIPVFFLLLAFVWQAAIG) traverse the membrane as a helical segment.

It belongs to the PsbK family. As to quaternary structure, PSII is composed of 1 copy each of membrane proteins PsbA, PsbB, PsbC, PsbD, PsbE, PsbF, PsbH, PsbI, PsbJ, PsbK, PsbL, PsbM, PsbT, PsbX, PsbY, PsbZ, Psb30/Ycf12, at least 3 peripheral proteins of the oxygen-evolving complex and a large number of cofactors. It forms dimeric complexes.

The protein resides in the plastid. It localises to the chloroplast thylakoid membrane. One of the components of the core complex of photosystem II (PSII). PSII is a light-driven water:plastoquinone oxidoreductase that uses light energy to abstract electrons from H(2)O, generating O(2) and a proton gradient subsequently used for ATP formation. It consists of a core antenna complex that captures photons, and an electron transfer chain that converts photonic excitation into a charge separation. This chain is Photosystem II reaction center protein K, found in Porphyra purpurea (Red seaweed).